Consider the following 127-residue polypeptide: Large ribosomal subunit protein bL20 (127 aa).

Belongs to the bacterial ribosomal protein bL20 family.

Its function is as follows. Binds directly to 23S ribosomal RNA and is necessary for the in vitro assembly process of the 50S ribosomal subunit. It is not involved in the protein synthesizing functions of that subunit. The protein is Large ribosomal subunit protein bL20 of Bifidobacterium longum (strain NCC 2705).